The following is a 283-amino-acid chain: 4-diphosphocytidyl-2-C-methyl-D-erythritol kinase (283 aa).

Lys10 is an active-site residue. Residue 99–109 coordinates ATP; the sequence is PMGGGLGGGSS. Asp141 is a catalytic residue.

It belongs to the GHMP kinase family. IspE subfamily. As to quaternary structure, homodimer.

It carries out the reaction 4-CDP-2-C-methyl-D-erythritol + ATP = 4-CDP-2-C-methyl-D-erythritol 2-phosphate + ADP + H(+). It functions in the pathway isoprenoid biosynthesis; isopentenyl diphosphate biosynthesis via DXP pathway; isopentenyl diphosphate from 1-deoxy-D-xylulose 5-phosphate: step 3/6. Its function is as follows. Catalyzes the phosphorylation of the position 2 hydroxy group of 4-diphosphocytidyl-2C-methyl-D-erythritol. This chain is 4-diphosphocytidyl-2-C-methyl-D-erythritol kinase, found in Shigella dysenteriae serotype 1 (strain Sd197).